The primary structure comprises 170 residues: NAD(P)H-quinone oxidoreductase subunit I, chloroplastic (170 aa).

2 consecutive 4Fe-4S ferredoxin-type domains span residues 55 to 84 and 95 to 124; these read GRIHFEFDKCIACEVCVRACPIDLPVVDWK and LNYSIDFGICIFCGNCVEYCPTNCLSMTEE. Residues cysteine 64, cysteine 67, cysteine 70, cysteine 74, cysteine 104, cysteine 107, cysteine 110, and cysteine 114 each contribute to the [4Fe-4S] cluster site.

It belongs to the complex I 23 kDa subunit family. As to quaternary structure, NDH is composed of at least 16 different subunits, 5 of which are encoded in the nucleus. [4Fe-4S] cluster serves as cofactor.

It localises to the plastid. The protein localises to the chloroplast thylakoid membrane. The enzyme catalyses a plastoquinone + NADH + (n+1) H(+)(in) = a plastoquinol + NAD(+) + n H(+)(out). The catalysed reaction is a plastoquinone + NADPH + (n+1) H(+)(in) = a plastoquinol + NADP(+) + n H(+)(out). NDH shuttles electrons from NAD(P)H:plastoquinone, via FMN and iron-sulfur (Fe-S) centers, to quinones in the photosynthetic chain and possibly in a chloroplast respiratory chain. The immediate electron acceptor for the enzyme in this species is believed to be plastoquinone. Couples the redox reaction to proton translocation, and thus conserves the redox energy in a proton gradient. In Spinacia oleracea (Spinach), this protein is NAD(P)H-quinone oxidoreductase subunit I, chloroplastic.